The sequence spans 209 residues: Large ribosomal subunit protein uL4 (209 aa).

The interval 45 to 78 (RQGTHKAKERAEVAGSTRKIKKQKGTGTARAGSA) is disordered.

This sequence belongs to the universal ribosomal protein uL4 family. As to quaternary structure, part of the 50S ribosomal subunit.

One of the primary rRNA binding proteins, this protein initially binds near the 5'-end of the 23S rRNA. It is important during the early stages of 50S assembly. It makes multiple contacts with different domains of the 23S rRNA in the assembled 50S subunit and ribosome. Functionally, forms part of the polypeptide exit tunnel. The chain is Large ribosomal subunit protein uL4 from Flavobacterium psychrophilum (strain ATCC 49511 / DSM 21280 / CIP 103535 / JIP02/86).